A 147-amino-acid chain; its full sequence is Lipoprotein YafY (147 aa).

Residues 1 to 20 form the signal peptide; it reads MKRKTLPLLALVATTLFLIA. C21 is lipidated: N-palmitoyl cysteine. C21 carries S-diacylglycerol cysteine lipidation.

It to E.coli YfjS.

It localises to the cell inner membrane. When overproduced strongly induces degP through the activation of the two-component envelope stress response system CpxA/CpxR. The sequence is that of Lipoprotein YafY (yafY) from Escherichia coli (strain K12).